The primary structure comprises 162 residues: Large ribosomal subunit protein uL10 (162 aa).

Belongs to the universal ribosomal protein uL10 family. As to quaternary structure, part of the ribosomal stalk of the 50S ribosomal subunit. The N-terminus interacts with L11 and the large rRNA to form the base of the stalk. The C-terminus forms an elongated spine to which L12 dimers bind in a sequential fashion forming a multimeric L10(L12)X complex.

Forms part of the ribosomal stalk, playing a central role in the interaction of the ribosome with GTP-bound translation factors. This chain is Large ribosomal subunit protein uL10, found in Vibrio parahaemolyticus serotype O3:K6 (strain RIMD 2210633).